The primary structure comprises 309 residues: Homoserine O-succinyltransferase (309 aa).

The active-site Acyl-thioester intermediate is the cysteine 142. Residues lysine 163 and serine 192 each coordinate substrate. Histidine 235 (proton acceptor) is an active-site residue. Glutamate 237 is an active-site residue. Position 249 (arginine 249) interacts with substrate.

It belongs to the MetA family.

The protein localises to the cytoplasm. The catalysed reaction is L-homoserine + succinyl-CoA = O-succinyl-L-homoserine + CoA. Its pathway is amino-acid biosynthesis; L-methionine biosynthesis via de novo pathway; O-succinyl-L-homoserine from L-homoserine: step 1/1. Functionally, transfers a succinyl group from succinyl-CoA to L-homoserine, forming succinyl-L-homoserine. This chain is Homoserine O-succinyltransferase, found in Yersinia enterocolitica serotype O:8 / biotype 1B (strain NCTC 13174 / 8081).